The following is a 236-amino-acid chain: CBS domain-containing protein CBSX1, chloroplastic (236 aa).

A chloroplast-targeting transit peptide spans 1-53; that stretch reads MDAVLYSVPLSFTPLRASSSPSSPYLLLPRFLSVQPCHKFTFSRSFPSKSRIP. The tract at residues 47-66 is disordered; sequence PSKSRIPSASSAAGSTLMTN. S54 carries the N-acetylserine modification. CBS domains follow at residues 81-142 and 175-231; these read MTKK…GRTE and MTPA…IKRS.

It localises to the plastid. It is found in the chloroplast. This is CBS domain-containing protein CBSX1, chloroplastic (CBSX1) from Arabidopsis thaliana (Mouse-ear cress).